The following is a 133-amino-acid chain: UPF0292 protein TGAM_1777 (133 aa).

In terms of domain architecture, Toprim spans 20–100 (EGALIVEGLR…RVDVETRREL (81 aa)). Positions 26, 69, and 71 each coordinate Mg(2+).

The protein belongs to the UPF0292 family. Requires Mg(2+) as cofactor.

In Thermococcus gammatolerans (strain DSM 15229 / JCM 11827 / EJ3), this protein is UPF0292 protein TGAM_1777.